The chain runs to 699 residues: Epithelial sodium channel subunit alpha (699 aa).

Positions 1 to 71 (MLDHTRAPEL…EPRQPTEEEE (71 aa)) are disordered. Over 1–110 (MLDHTRAPEL…CSKHNRMKTA (110 aa)) the chain is Cytoplasmic. Residues 111–131 (FWAVLWLCTFGMMYWQFALLF) form a helical membrane-spanning segment. At 132–589 (EEYFSYPVSL…SQWSLWFGSS (458 aa)) the chain is on the extracellular side. Cystine bridges form between cysteine 158/cysteine 332, cysteine 256/cysteine 263, cysteine 309/cysteine 316, cysteine 421/cysteine 506, cysteine 443/cysteine 483, cysteine 443/cysteine 502, cysteine 447/cysteine 498, cysteine 456/cysteine 483, cysteine 456/cysteine 506, and cysteine 458/cysteine 472. The interval 200–270 (RRRSTRDLRG…SDCFYQTYSS (71 aa)) is gating release of inhibition by proteolysis (GRIP); protease-sensitive region that is responsible for the proteolytic activation of the channel. The segment at 211-244 (LPHPLQRLRTPPPPNPARSARSASSSVRDNNPQV) is disordered. Residues 227 to 238 (ARSARSASSSVR) are compositionally biased toward low complexity. A helical transmembrane segment spans residues 590 to 610 (VLSVVEMAELIFDLLVITLIM). Residues 611–699 (LLHRFRSRYW…SSACAPAMAL (89 aa)) are Cytoplasmic-facing. The interval 637-699 (ASSFPSRFCP…SSACAPAMAL (63 aa)) is disordered. Positions 656–667 (PQQGTTPPLALT) are enriched in low complexity. A PY motif; recruits WW domain-containing proteins and is thereby required for ubiquitination and inhibition of the channel by NEDD4 and NEDD4L motif is present at residues 669–673 (PPPAY).

The protein belongs to the amiloride-sensitive sodium channel (TC 1.A.6) family. SCNN1A subfamily. Heterotrimer; containing an alpha/SCNN1A, a beta/SCNN1B and a gamma/SCNN1G subunit. Interacts with WWP1 (via WW domains). Interacts with WWP2 (via WW domains); inhibits the channel. Interacts with BPIFA1; the interaction is indirect via SCNN1B and inhibits the proteolytic processing of SCNN1A and SCNN1G and the activation of ENaC. Interacts with the full-length immature form of PCSK9 (pro-PCSK9). In terms of processing, ubiquitinated. Can be ubiquitinated at multiple sites and undergo monoubiquitination and polyubiquitination. Ubiquitination by NEDD4 or NEDD4L inhibits the ENaC channel through endocytosis, intracellular retention and degradation of its individual subunits. Post-translationally, ENaC is activated through the proteolytic maturation of its subunits. Furin cleaves the SCNN1A subunit, which results in a stepwise increase in the open probability of the channel due to the release of an inhibitory tract. BPIFA1, which is recruited by the SCNN1B subunit, prevents the proteolytic activation of ENaC. N-glycosylated. Expressed in kidney (at protein level). Expressed in lung (at protein level). Expressed in the epididymis (at protein level). In the caput and corpus regions of the epididymis, expressed uniformly on the luminal and basal surfaces of the ducts and in the sperm in the duct lumen. Also expressed in distal colon and, at low levels, in liver.

Its subcellular location is the apical cell membrane. It localises to the cell projection. The protein resides in the cilium. The protein localises to the cytoplasmic granule. It is found in the cytoplasm. Its subcellular location is the cytoplasmic vesicle. It localises to the secretory vesicle. The protein resides in the acrosome. The protein localises to the flagellum. It carries out the reaction Na(+)(in) = Na(+)(out). Its activity is regulated as follows. Originally identified and characterized by its inhibition by the diuretic drug amiloride. Functionally, this is one of the three pore-forming subunits of the heterotrimeric epithelial sodium channel (ENaC), a critical regulator of sodium balance and fluid homeostasis. ENaC operates in epithelial tissues, where it mediates the electrodiffusion of sodium ions from extracellular fluid through the apical membrane of cells, with water following osmotically. It plays a key role in maintaining sodium homeostasis through electrogenic sodium reabsorption in the kidneys. Additionally, ENaC is essential for airway surface liquid homeostasis, which is crucial for proper mucus clearance. The polypeptide is Epithelial sodium channel subunit alpha (Mus musculus (Mouse)).